We begin with the raw amino-acid sequence, 345 residues long: Anthranilate phosphoribosyltransferase (345 aa).

5-phospho-alpha-D-ribose 1-diphosphate-binding positions include Gly-84, Gly-87–Asp-88, Thr-92, Asn-94–Thr-97, Lys-112–Ser-120, and Ser-124. Anthranilate is bound at residue Gly-84. Residue Ser-96 participates in Mg(2+) binding. Asn-115 contacts anthranilate. Arg-170 is an anthranilate binding site. Residues Asp-229 and Glu-230 each contribute to the Mg(2+) site.

The protein belongs to the anthranilate phosphoribosyltransferase family. In terms of assembly, homodimer. Mg(2+) serves as cofactor.

The enzyme catalyses N-(5-phospho-beta-D-ribosyl)anthranilate + diphosphate = 5-phospho-alpha-D-ribose 1-diphosphate + anthranilate. It participates in amino-acid biosynthesis; L-tryptophan biosynthesis; L-tryptophan from chorismate: step 2/5. Functionally, catalyzes the transfer of the phosphoribosyl group of 5-phosphorylribose-1-pyrophosphate (PRPP) to anthranilate to yield N-(5'-phosphoribosyl)-anthranilate (PRA). The sequence is that of Anthranilate phosphoribosyltransferase from Xanthomonas euvesicatoria pv. vesicatoria (strain 85-10) (Xanthomonas campestris pv. vesicatoria).